The primary structure comprises 272 residues: Shikimate dehydrogenase (NADP(+)) (272 aa).

Shikimate is bound by residues 14-16 (SKS) and Thr61. Lys65 serves as the catalytic Proton acceptor. Glu77 is an NADP(+) binding site. 2 residues coordinate shikimate: Asn86 and Asp102. NADP(+)-binding positions include 126-130 (GAGGA), 149-154 (NRTFSR), and Met213. Residue Tyr215 coordinates shikimate. Residue Gly237 coordinates NADP(+).

Belongs to the shikimate dehydrogenase family. Homodimer.

The enzyme catalyses shikimate + NADP(+) = 3-dehydroshikimate + NADPH + H(+). The protein operates within metabolic intermediate biosynthesis; chorismate biosynthesis; chorismate from D-erythrose 4-phosphate and phosphoenolpyruvate: step 4/7. In terms of biological role, involved in the biosynthesis of the chorismate, which leads to the biosynthesis of aromatic amino acids. Catalyzes the reversible NADPH linked reduction of 3-dehydroshikimate (DHSA) to yield shikimate (SA). The chain is Shikimate dehydrogenase (NADP(+)) from Photorhabdus laumondii subsp. laumondii (strain DSM 15139 / CIP 105565 / TT01) (Photorhabdus luminescens subsp. laumondii).